The chain runs to 233 residues: Glyceraldehyde 3-phosphate phosphatase (233 aa).

The protein belongs to the HAD-like hydrolase superfamily. Mg(2+) is required as a cofactor.

In terms of biological role, catalyzes the dephosphorylation of D,L-glyceraldehyde 3-phosphate in vitro. In Methanopyrus kandleri (strain AV19 / DSM 6324 / JCM 9639 / NBRC 100938), this protein is Glyceraldehyde 3-phosphate phosphatase.